The chain runs to 262 residues: 5'-nucleotidase SurE (262 aa).

Residues aspartate 8, aspartate 9, serine 39, and asparagine 91 each coordinate a divalent metal cation.

Belongs to the SurE nucleotidase family. Requires a divalent metal cation as cofactor.

The protein localises to the cytoplasm. It catalyses the reaction a ribonucleoside 5'-phosphate + H2O = a ribonucleoside + phosphate. In terms of biological role, nucleotidase that shows phosphatase activity on nucleoside 5'-monophosphates. This chain is 5'-nucleotidase SurE, found in Geobacter sulfurreducens (strain ATCC 51573 / DSM 12127 / PCA).